The chain runs to 301 residues: GTPase Era (301 aa).

In terms of domain architecture, Era-type G spans 4-173; the sequence is KAGFVALIGK…LECISKYLSP (170 aa). Positions 12 to 19 are G1; that stretch reads GKPNAGKS. Position 12 to 19 (12 to 19) interacts with GTP; it reads GKPNAGKS. Positions 38 to 42 are G2; sequence NATRK. Residues 64 to 67 form a G3 region; it reads DTPG. GTP contacts are provided by residues 64-68 and 122-125; these read DTPGL and SKID. The tract at residues 122-125 is G4; the sequence is SKID. The interval 152 to 154 is G5; that stretch reads LSA. Residues 204–280 enclose the KH type-2 domain; it reads LSDEIPYESD…FLNLQVIAQK (77 aa).

The protein belongs to the TRAFAC class TrmE-Era-EngA-EngB-Septin-like GTPase superfamily. Era GTPase family. As to quaternary structure, monomer.

It localises to the cytoplasm. The protein resides in the cell inner membrane. In terms of biological role, an essential GTPase that binds both GDP and GTP, with rapid nucleotide exchange. Plays a role in 16S rRNA processing and 30S ribosomal subunit biogenesis and possibly also in cell cycle regulation and energy metabolism. In Helicobacter pylori (strain G27), this protein is GTPase Era.